The sequence spans 139 residues: Small ribosomal subunit protein uS12m (139 aa).

Residues Met-1–Ser-29 constitute a mitochondrion transit peptide. The tract at residues Met-36–Arg-56 is disordered.

It belongs to the universal ribosomal protein uS12 family. Component of the mitochondrial ribosome small subunit (28S) which comprises a 12S rRNA and about 30 distinct proteins.

It is found in the mitochondrion. In Pongo abelii (Sumatran orangutan), this protein is Small ribosomal subunit protein uS12m (MRPS12).